The sequence spans 217 residues: Ribosomal RNA large subunit methyltransferase E (217 aa).

5 residues coordinate S-adenosyl-L-methionine: G64, W66, D92, D108, and D133. K173 (proton acceptor) is an active-site residue.

The protein belongs to the class I-like SAM-binding methyltransferase superfamily. RNA methyltransferase RlmE family.

It localises to the cytoplasm. It catalyses the reaction uridine(2552) in 23S rRNA + S-adenosyl-L-methionine = 2'-O-methyluridine(2552) in 23S rRNA + S-adenosyl-L-homocysteine + H(+). Specifically methylates the uridine in position 2552 of 23S rRNA at the 2'-O position of the ribose in the fully assembled 50S ribosomal subunit. This Delftia acidovorans (strain DSM 14801 / SPH-1) protein is Ribosomal RNA large subunit methyltransferase E.